The primary structure comprises 272 residues: Energy-coupling factor transporter ATP-binding protein EcfA1 (272 aa).

In terms of domain architecture, ABC transporter spans 2 to 237 (IKVSDVCFSY…KNIIEKAKID (236 aa)). 37 to 44 (GHNGSGKS) contributes to the ATP binding site.

It belongs to the ABC transporter superfamily. Energy-coupling factor EcfA family. In terms of assembly, forms a stable energy-coupling factor (ECF) transporter complex composed of 2 membrane-embedded substrate-binding proteins (S component), 2 ATP-binding proteins (A component) and 2 transmembrane proteins (T component).

The protein localises to the cell membrane. In terms of biological role, ATP-binding (A) component of a common energy-coupling factor (ECF) ABC-transporter complex. Unlike classic ABC transporters this ECF transporter provides the energy necessary to transport a number of different substrates. In Mesomycoplasma hyopneumoniae (strain J / ATCC 25934 / NCTC 10110) (Mycoplasma hyopneumoniae), this protein is Energy-coupling factor transporter ATP-binding protein EcfA1.